Consider the following 65-residue polypeptide: Large ribosomal subunit protein uL29 (65 aa).

Belongs to the universal ribosomal protein uL29 family.

The chain is Large ribosomal subunit protein uL29 from Dehalococcoides mccartyi (strain ATCC BAA-2266 / KCTC 15142 / 195) (Dehalococcoides ethenogenes (strain 195)).